A 309-amino-acid polypeptide reads, in one-letter code: MVNRRDLIKWSAVALGAGAGLAGPAPAAHAADLEWEQYPVPAAPGGNRSWQLLPSHSDDFNYTGKPQTFRGRWLDQHKDGWSGPANSLYSARHSWVADGNLIVEGRRAPDGRVYCGYVTSRTPVEYPLYTEVLMRVSGLKLSSNFWLLSRDDVNEIDVIECYGNESLHGKHMNTAYHIFQRNPFTELARSQKGYFADGSYGYNGETGQVFGDGAGQPLLRNGFHRYGVHWISATEFDFYFNGRLVRRLNRSNDLRDPRSRFFDQPMHLILNTESHQWRVDRGIEPTDAELADPSINNIYYRWVRTYQAV.

Positions 1–30 (MVNRRDLIKWSAVALGAGAGLAGPAPAAHA) form a signal peptide, tat-type signal. Positions 33-309 (LEWEQYPVPA…YRWVRTYQAV (277 aa)) constitute a GH16 domain. Glu-155 (nucleophile) is an active-site residue. Catalysis depends on Glu-160, which acts as the Proton donor.

The protein belongs to the glycosyl hydrolase 16 family. Predicted to be exported by the Tat system. The position of the signal peptide cleavage has been experimentally proven.

It is found in the secreted. It carries out the reaction Hydrolysis of (1-&gt;4)-beta-D-galactosidic linkages in agarose, giving the tetramer as the predominant product.. The protein is Extracellular agarase (dagA) of Streptomyces coelicolor (strain ATCC BAA-471 / A3(2) / M145).